The sequence spans 820 residues: Probable beta-glucosidase ARB_05654 (820 aa).

The first 18 residues, 1–18 (MLFRWCPLVALAIASGTA), serve as a signal peptide directing secretion. 2 N-linked (GlcNAc...) asparagine glycosylation sites follow: Asn62 and Asn276. Residue Asp304 is part of the active site. Asn339, Asn346, Asn465, Asn547, Asn566, Asn588, and Asn811 each carry an N-linked (GlcNAc...) asparagine glycan.

Belongs to the glycosyl hydrolase 3 family.

The protein localises to the secreted. It carries out the reaction Hydrolysis of terminal, non-reducing beta-D-glucosyl residues with release of beta-D-glucose.. Its pathway is glycan metabolism; cellulose degradation. In terms of biological role, beta-glucosidases are one of a number of cellulolytic enzymes involved in the degradation of cellulosic biomass. Catalyzes the last step releasing glucose from the inhibitory cellobiose. The polypeptide is Probable beta-glucosidase ARB_05654 (Arthroderma benhamiae (strain ATCC MYA-4681 / CBS 112371) (Trichophyton mentagrophytes)).